The primary structure comprises 229 residues: Uracil-DNA glycosylase (229 aa).

The active-site Proton acceptor is Asp-70.

Belongs to the uracil-DNA glycosylase (UDG) superfamily. UNG family.

Its subcellular location is the cytoplasm. The enzyme catalyses Hydrolyzes single-stranded DNA or mismatched double-stranded DNA and polynucleotides, releasing free uracil.. Functionally, excises uracil residues from the DNA which can arise as a result of misincorporation of dUMP residues by DNA polymerase or due to deamination of cytosine. This chain is Uracil-DNA glycosylase, found in Chlamydia trachomatis serovar A (strain ATCC VR-571B / DSM 19440 / HAR-13).